A 588-amino-acid chain; its full sequence is Nuclear hormone receptor family member nhr-23 (588 aa).

The segment at leucine 50–serine 73 is disordered. A compositionally biased stretch (polar residues) spans alanine 52–threonine 64. Positions valine 160–phenylalanine 235 form a DNA-binding region, nuclear receptor. 2 NR C4-type zinc fingers span residues cysteine 163–cysteine 183 and cysteine 199–cysteine 223. The NR LBD domain maps to proline 345–aspartate 586.

The protein belongs to the nuclear hormone receptor family. NR1 subfamily. In terms of tissue distribution, expressed in the germline and oocytes and is a maternal gene product. In males and sperm-producing hermaphrodites, expressed in early pachytene spermatocytes, increasing in level throughout late pachytene. Expression is undetectable in meiotically dividing spermatocytes or mature spermatids.

The protein localises to the nucleus. Its function is as follows. Orphan nuclear receptor. Transcription factor. Modulates expression of target genes, such as Period protein homolog lin-42 and microRNA let-7, by binding to hormone response elements (HRE). Involved in promoting oscillatory expression of the primary transcripts of let-7 and paralogous microRNAs miR-48, miR-84, and miR-241. Plays a role in normal development and required to regulate each larval molt. Involved in regulating both the frequency and number of molts, acting as part of a negative feedback loop with the let-7 family of microRNAs, perhaps contributing to a self-sustaining molecular-genetic oscillator. Positively modulates expression of collagen and hedgehog-related genes. Involved in development of the gonad and associated epidermal structures. Required in spermatogenesis, acting following the sperm/oocyte cell fate decision, downstream of the canonical sex-determination pathway. Involved in regulating formation of the sperm-specific fibrous body-membranous organelle (FB-MO) complexes, acting independently of transcription regulator spe-44. The protein is Nuclear hormone receptor family member nhr-23 of Caenorhabditis elegans.